A 352-amino-acid chain; its full sequence is Protein RecA (352 aa).

67–74 is an ATP binding site; the sequence is GPESSGKT.

The protein belongs to the RecA family.

The protein resides in the cytoplasm. In terms of biological role, can catalyze the hydrolysis of ATP in the presence of single-stranded DNA, the ATP-dependent uptake of single-stranded DNA by duplex DNA, and the ATP-dependent hybridization of homologous single-stranded DNAs. It interacts with LexA causing its activation and leading to its autocatalytic cleavage. In Aggregatibacter actinomycetemcomitans (Actinobacillus actinomycetemcomitans), this protein is Protein RecA.